A 156-amino-acid chain; its full sequence is Small ribosomal subunit protein uS7 (156 aa).

The protein belongs to the universal ribosomal protein uS7 family. Part of the 30S ribosomal subunit. Contacts proteins S9 and S11.

One of the primary rRNA binding proteins, it binds directly to 16S rRNA where it nucleates assembly of the head domain of the 30S subunit. Is located at the subunit interface close to the decoding center, probably blocks exit of the E-site tRNA. This chain is Small ribosomal subunit protein uS7, found in Caldanaerobacter subterraneus subsp. tengcongensis (strain DSM 15242 / JCM 11007 / NBRC 100824 / MB4) (Thermoanaerobacter tengcongensis).